Here is a 122-residue protein sequence, read N- to C-terminus: MADNMTTTQIEWRMKKMAIGSSTHSSSVLMKDIQSQFEQLKLRWESYPNLVKSTDYHQKRETIRLATEELYLLSKRIDDSILFHKTVIANSSIIADMIVSLSLLETLYEMKDVVEVYSRQCL.

2 consecutive short sequence motifs (nuclear export signal) follow at residues 10–19 and 86–95; these read IEWRMKKMAI and TVIANSSIIA.

It belongs to the influenza viruses NEP family. As to quaternary structure, interacts with protein M1. May interact with host nucleoporin RAB/HRB and exportin XPO1/CRM1.

It is found in the virion. Its subcellular location is the host nucleus. In terms of biological role, mediates the nuclear export of encapsidated genomic RNAs (ribonucleoproteins, RNPs). Acts as an adapter between viral RNPs complexes and the nuclear export machinery of the cell. Possesses no intrinsic RNA-binding activity, but includes a C-terminal M1-binding domain. This domain is believed to allow recognition of RNPs bound to the protein M1. Since protein M1 is not available in large quantities before late stages of infection, such an indirect recognition mechanism probably ensures that genomic RNPs are not exported from the host nucleus until sufficient quantities of viral mRNA and progeny genomic RNA have been synthesized. Furthermore, the RNPs enter the host cytoplasm only when associated with the M1 protein that is necessary to guide them to the plasma membrane. May down-regulate viral RNA synthesis when overproduced. The chain is Nuclear export protein from Homo sapiens (Human).